A 252-amino-acid chain; its full sequence is MAGHSKWATTKHKKAANDAKRGKEFAKLVKNIEVAARMGGGDPSANPTLDDMIKKAKKASVPNDNIERARKRGSGEEAGGADWVPIMYEGYGPNGVAVLIECLTDNRNRAATEVRTAMSKNGGNLGETGSVSYMFTRTGIVQVKKGELTEDDVLIAVLEAGAEEVNDLGEVFEITCEPTDLEAVKAALVDAGIEIEDADSDFRASVEVPLDAEGARKIFRLVDALEDSDDVQNVYTNITLSDEVLAELENDE.

Residues methionine 1–glycine 22 form a disordered region.

Belongs to the TACO1 family.

It localises to the cytoplasm. This chain is Probable transcriptional regulatory protein CE1776, found in Corynebacterium efficiens (strain DSM 44549 / YS-314 / AJ 12310 / JCM 11189 / NBRC 100395).